A 125-amino-acid polypeptide reads, in one-letter code: PEP-dependent dihydroxyacetone kinase 2, phosphoryl donor subunit DhaM (125 aa).

In terms of domain architecture, PTS EIIA type-4 spans 1-125 (MISIVLVSHS…AILQELTNVH (125 aa)). His9 (tele-phosphohistidine intermediate) is an active-site residue.

It belongs to the PEP-utilizing enzyme family. In terms of assembly, homodimer. The dihydroxyacetone kinase complex is composed of a homodimer of DhaM, a homodimer of DhaK and the subunit DhaL.

Its subcellular location is the cytoplasm. The enzyme catalyses dihydroxyacetone + phosphoenolpyruvate = dihydroxyacetone phosphate + pyruvate. In terms of biological role, component of the dihydroxyacetone kinase complex, which is responsible for the phosphoenolpyruvate (PEP)-dependent phosphorylation of dihydroxyacetone. DhaM serves as the phosphoryl donor. Is phosphorylated by phosphoenolpyruvate in an EI- and HPr-dependent reaction, and a phosphorelay system on histidine residues finally leads to phosphoryl transfer to DhaL and dihydroxyacetone. The sequence is that of PEP-dependent dihydroxyacetone kinase 2, phosphoryl donor subunit DhaM from Listeria innocua serovar 6a (strain ATCC BAA-680 / CLIP 11262).